The following is a 190-amino-acid chain: Translation initiation factor IF-3 (190 aa).

The protein belongs to the IF-3 family. Monomer.

The protein localises to the cytoplasm. In terms of biological role, IF-3 binds to the 30S ribosomal subunit and shifts the equilibrium between 70S ribosomes and their 50S and 30S subunits in favor of the free subunits, thus enhancing the availability of 30S subunits on which protein synthesis initiation begins. This chain is Translation initiation factor IF-3, found in Prochlorococcus marinus subsp. pastoris (strain CCMP1986 / NIES-2087 / MED4).